The following is a 753-amino-acid chain: MAP/microtubule affinity-regulating kinase 3 (753 aa).

Positions 1–36 (MSTRTPLPTVNERDTENHTSHGDGRQEVTSRTSRSG) are disordered. The segment covering 11–28 (NERDTENHTSHGDGRQEV) has biased composition (basic and acidic residues). At S42 the chain carries Phosphoserine. The 252-residue stretch at 56–307 (YRLLKTIGKG…LEQIMKDRWI (252 aa)) folds into the Protein kinase domain. Residues 62–70 (IGKGNFAKV) and K85 each bind ATP. Catalysis depends on D178, which acts as the Proton acceptor. T211 is modified (phosphothreonine; by LKB1). The UBA domain maps to 326 to 365 (ISDQKRIDIMVGMGYSQEEIQESLSKMKYDEITATYLLLG). S368, S374, S376, S380, S383, L384, S400, R407, S419, and S469 each carry phosphoserine. A disordered region spans residues 370–600 (ELDASDSSSS…TPLSQTRSRG (231 aa)). Residues 374 to 385 (SDSSSSSNLSLA) are compositionally biased toward low complexity. Residues 391-400 (SDLNNSTGQS) are compositionally biased toward polar residues. Composition is skewed to polar residues over residues 490–513 (STVPSSNTASGGMTRRNTYVCSER) and 521–548 (VIQNGKENSTIPDQRTPVASTHSISSAA). 2 positions are modified to phosphoserine: S540 and S543. Residue T549 is modified to Phosphothreonine. T564 bears the Phosphothreonine; by PKC/PRKCZ mark. Residues S583, S598, S601, and S643 each carry the phosphoserine modification. A compositionally biased stretch (polar residues) spans 584–600 (PSLSHEATPLSQTRSRG). The segment at 632-655 (NGRYEGSSRNVSAEQKDENKEAKP) is disordered. Over residues 645 to 655 (EQKDENKEAKP) the composition is skewed to basic and acidic residues. The KA1 domain occupies 704-753 (DGHAENLVQWEMEVCKLPRLSLNGVRFKRISGTSIAFKNIASKIANELKL).

This sequence belongs to the protein kinase superfamily. CAMK Ser/Thr protein kinase family. SNF1 subfamily. In terms of assembly, interacts with MAPT/TAU. Interacts with DLG5 (via coiled-coil domain). Interacts with STK3/MST2 and STK4/MST1 in the presence of DLG5. Interacts with YWHAB, YWHAG, YWHAQ and YWHAZ. Interacts with PKP2 (via N-terminus). Interacts with CDC25C. Interacts with KSR1. Post-translationally, phosphorylated at Thr-211 by STK11/LKB1 in complex with STE20-related adapter-alpha (STRADA) pseudo kinase and CAB39. Phosphorylation at Thr-564 by PRKCZ/aPKC inhibits the kinase activity. As to expression, ubiquitous.

Its subcellular location is the cell membrane. The protein resides in the cell projection. It is found in the dendrite. The protein localises to the cytoplasm. The enzyme catalyses L-seryl-[protein] + ATP = O-phospho-L-seryl-[protein] + ADP + H(+). The catalysed reaction is L-threonyl-[protein] + ATP = O-phospho-L-threonyl-[protein] + ADP + H(+). Activated by phosphorylation on Thr-211. Inhibited by phosphorylation on Thr-564. Functionally, serine/threonine-protein kinase. Involved in the specific phosphorylation of microtubule-associated proteins for MAP2 and MAP4. Phosphorylates the microtubule-associated protein MAPT/TAU. Phosphorylates CDC25C on 'Ser-216'. Regulates localization and activity of some histone deacetylases by mediating phosphorylation of HDAC7, promoting subsequent interaction between HDAC7 and 14-3-3 and export from the nucleus. Regulates localization and activity of MITF by mediating its phosphorylation, promoting subsequent interaction between MITF and 14-3-3 and retention in the cytosol. Negatively regulates the Hippo signaling pathway and antagonizes the phosphorylation of LATS1. Cooperates with DLG5 to inhibit the kinase activity of STK3/MST2 toward LATS1. Phosphorylates PKP2 and KSR1. The protein is MAP/microtubule affinity-regulating kinase 3 (MARK3) of Homo sapiens (Human).